The following is a 122-amino-acid chain: Holo-[acyl-carrier-protein] synthase (122 aa).

Residues Asp-8 and Glu-56 each coordinate Mg(2+).

It belongs to the P-Pant transferase superfamily. AcpS family. The cofactor is Mg(2+).

It localises to the cytoplasm. The catalysed reaction is apo-[ACP] + CoA = holo-[ACP] + adenosine 3',5'-bisphosphate + H(+). Its function is as follows. Transfers the 4'-phosphopantetheine moiety from coenzyme A to a Ser of acyl-carrier-protein. The sequence is that of Holo-[acyl-carrier-protein] synthase from Alkaliphilus oremlandii (strain OhILAs) (Clostridium oremlandii (strain OhILAs)).